Consider the following 578-residue polypeptide: Suppressor of smlA (578 aa).

Functionally, involved in regulation of group size of aggregation streams. This Dictyostelium discoideum (Social amoeba) protein is Suppressor of smlA (sslA1).